Reading from the N-terminus, the 254-residue chain is Acetylglutamate kinase (254 aa).

Residues 40–41 (GG), R62, and N158 each bind substrate.

It belongs to the acetylglutamate kinase family. ArgB subfamily.

Its subcellular location is the cytoplasm. The catalysed reaction is N-acetyl-L-glutamate + ATP = N-acetyl-L-glutamyl 5-phosphate + ADP. It participates in amino-acid biosynthesis; L-arginine biosynthesis; N(2)-acetyl-L-ornithine from L-glutamate: step 2/4. In terms of biological role, catalyzes the ATP-dependent phosphorylation of N-acetyl-L-glutamate. The chain is Acetylglutamate kinase from Chloroflexus aggregans (strain MD-66 / DSM 9485).